The chain runs to 138 residues: Large ribosomal subunit protein bL17 (138 aa).

Belongs to the bacterial ribosomal protein bL17 family. As to quaternary structure, part of the 50S ribosomal subunit. Contacts protein L32.

The polypeptide is Large ribosomal subunit protein bL17 (Methylorubrum extorquens (strain PA1) (Methylobacterium extorquens)).